The following is a 181-amino-acid chain: Ribulose bisphosphate carboxylase small subunit 3B, chloroplastic (181 aa).

Residues 1–54 constitute a chloroplast transit peptide; sequence MASSMLSSAAVVTSPAQATMVAPFTGLKSSAAFPVTRKTNKDITSIASNGGRVS.

It belongs to the RuBisCO small chain family. As to quaternary structure, heterohexadecamer of 8 large and 8 small subunits.

It is found in the plastid. It localises to the chloroplast. Functionally, ruBisCO catalyzes two reactions: the carboxylation of D-ribulose 1,5-bisphosphate, the primary event in carbon dioxide fixation, as well as the oxidative fragmentation of the pentose substrate. Both reactions occur simultaneously and in competition at the same active site. Although the small subunit is not catalytic it is essential for maximal activity. This chain is Ribulose bisphosphate carboxylase small subunit 3B, chloroplastic (RBCS-3B), found in Arabidopsis thaliana (Mouse-ear cress).